A 451-amino-acid polypeptide reads, in one-letter code: MPREIITLQLGQCGNQIGFEFWKQLCAEHGISPEGIVEEFATEGTDRKDVFFYQADDEHYIPRAVLLDLEPRVIHSILNSPYANLYNPENIYLSEHGGGAGNNWASGFSQGEKIHEDIFDIIDREADGSDSLEGFVLCHSIAGGTGSGLGSYLLERLNDRYPKKLVQTYSVFPNQDEMSHVVVQPYNSLLTLKRLTQNADCVVVLDNTALNRIATDRLHIQNPSFSQINQLVSTIMSASTTTLRYPGYMNNDLIGLIASLIPTPRLHFLMTGYTPLTTDQSVASVRKTTVLDVMRRLLQPKNVMVSTGRDRQTNHCYIAILNIIQGEVDPTQVHKSLQRIRERKLANFIPWGPASIQVALSRKSPYLPSAHRVSGLMMANHTNISSLFERTCRQYDKLRKREAFLEQFRKEDIFKDNFDELDNSREIVQQLIDEYHAATRPDYISWGTQDK.

Position 142-148 (A142–G148) interacts with GTP.

This sequence belongs to the tubulin family.

Its subcellular location is the cytoplasm. The protein localises to the cytoskeleton. It localises to the microtubule organizing center. The protein resides in the centrosome. It is found in the spindle. In terms of biological role, tubulin is the major constituent of microtubules. The gamma chain is found at microtubule organizing centers (MTOC) such as the spindle poles or the centrosome, suggesting that it is involved in the minus-end nucleation of microtubule assembly. This chain is Tubulin gamma-1 chain (tubg1), found in Xenopus laevis (African clawed frog).